Reading from the N-terminus, the 377-residue chain is Endoplasmic reticulum-Golgi intermediate compartment protein 2 (377 aa).

At 1–33 (MRRLNRKKTLSLVKELDAFPKVPESYVETSASG) the chain is on the cytoplasmic side. The helical transmembrane segment at 34 to 54 (GTVSLIAFTTMALLTIMEFSV) threads the bilayer. Over 55-319 (YQDTWMKYEY…PFWQFFVRLC (265 aa)) the chain is Lumenal. A helical membrane pass occupies residues 320-340 (GIVGGIFSTTGMLHGIGKFIV). Topologically, residues 341-377 (EIICCRFRLGSYKPVNSVPFEDGHTDNHLPLLENNTH) are cytoplasmic.

This sequence belongs to the ERGIC family. In terms of assembly, may form a heteromeric complex composed of ERGIC1, ERGIC2 and ERGIC3. Interacts with ERGIC3, the interaction is required for the stable expression of both proteins. May interact with EEF1A1. As to expression, ubiquitously expressed.

The protein localises to the endoplasmic reticulum-Golgi intermediate compartment membrane. It is found in the golgi apparatus. The protein resides in the cis-Golgi network membrane. It localises to the endoplasmic reticulum membrane. Its subcellular location is the cytoplasm. The protein localises to the nucleus. In terms of biological role, possible role in transport between endoplasmic reticulum and Golgi. The chain is Endoplasmic reticulum-Golgi intermediate compartment protein 2 (ERGIC2) from Homo sapiens (Human).